Here is a 316-residue protein sequence, read N- to C-terminus: Acetyl-coenzyme A carboxylase carboxyl transferase subunit alpha (316 aa).

One can recognise a CoA carboxyltransferase C-terminal domain in the interval 39–293 (RLQDKSESLT…REQLNSQLHM (255 aa)).

It belongs to the AccA family. Acetyl-CoA carboxylase is a heterohexamer composed of biotin carboxyl carrier protein (AccB), biotin carboxylase (AccC) and two subunits each of ACCase subunit alpha (AccA) and ACCase subunit beta (AccD).

The protein resides in the cytoplasm. It catalyses the reaction N(6)-carboxybiotinyl-L-lysyl-[protein] + acetyl-CoA = N(6)-biotinyl-L-lysyl-[protein] + malonyl-CoA. Its pathway is lipid metabolism; malonyl-CoA biosynthesis; malonyl-CoA from acetyl-CoA: step 1/1. Functionally, component of the acetyl coenzyme A carboxylase (ACC) complex. First, biotin carboxylase catalyzes the carboxylation of biotin on its carrier protein (BCCP) and then the CO(2) group is transferred by the carboxyltransferase to acetyl-CoA to form malonyl-CoA. The protein is Acetyl-coenzyme A carboxylase carboxyl transferase subunit alpha of Stutzerimonas stutzeri (strain A1501) (Pseudomonas stutzeri).